The chain runs to 632 residues: Extracellular metalloproteinase 2 (632 aa).

Positions 1–19 (MHGLLLAGLAAALPLGVAG) are cleaved as a signal peptide. The propeptide occupies 20–244 (LPARQQSGLS…VHNVVDYVAS (225 aa)). N-linked (GlcNAc...) asparagine glycosylation is present at Asn-270. His-429 provides a ligand contact to Zn(2+). Glu-430 is a catalytic residue. His-433 is a Zn(2+) binding site.

It belongs to the peptidase M36 family. The cofactor is Zn(2+).

It localises to the secreted. Its function is as follows. Secreted metalloproteinase probably acting as a virulence factor. In Trichophyton tonsurans (Scalp ringworm fungus), this protein is Extracellular metalloproteinase 2 (MEP2).